The sequence spans 340 residues: Biotin synthase (340 aa).

The tract at residues 1-21 (MDAASVSFGSGHDLSSQPRHD) is disordered. The Radical SAM core domain maps to 53–272 (NHVETANLLS…IAVARIMMPR (220 aa)). Positions 68, 72, and 75 each coordinate [4Fe-4S] cluster. Cys112, Cys143, Cys203, and Arg276 together coordinate [2Fe-2S] cluster.

It belongs to the radical SAM superfamily. Biotin synthase family. In terms of assembly, homodimer. [4Fe-4S] cluster serves as cofactor. Requires [2Fe-2S] cluster as cofactor.

It carries out the reaction (4R,5S)-dethiobiotin + (sulfur carrier)-SH + 2 reduced [2Fe-2S]-[ferredoxin] + 2 S-adenosyl-L-methionine = (sulfur carrier)-H + biotin + 2 5'-deoxyadenosine + 2 L-methionine + 2 oxidized [2Fe-2S]-[ferredoxin]. It functions in the pathway cofactor biosynthesis; biotin biosynthesis; biotin from 7,8-diaminononanoate: step 2/2. Functionally, catalyzes the conversion of dethiobiotin (DTB) to biotin by the insertion of a sulfur atom into dethiobiotin via a radical-based mechanism. This Nitrobacter hamburgensis (strain DSM 10229 / NCIMB 13809 / X14) protein is Biotin synthase.